We begin with the raw amino-acid sequence, 310 residues long: Solute carrier family 25 member 47 (310 aa).

3 Solcar repeats span residues 1-80 (MDFV…CLAH), 93-208 (PTKA…LSEW), and 217-304 (PDVL…VLRL). The next 6 helical transmembrane spans lie at 3 to 23 (FVAGAIGGVCGVAVGYPLDTV), 49 to 69 (LWGFYRGLSLPVCTVSLVSSV), 98 to 116 (ITLSGCASGLVRVFLTSPT), 192 to 212 (GHSFATYFLSYAVLSEWLTPA), 219 to 239 (VLGVLVAGGCAGVLAWAVATP), and 275 to 295 (VLFKGLALNCCRAFPVNMVVF).

The protein belongs to the mitochondrial carrier (TC 2.A.29) family.

Its subcellular location is the mitochondrion inner membrane. The protein resides in the mitochondrion outer membrane. It catalyses the reaction NAD(+)(in) = NAD(+)(out). The catalysed reaction is acetyl-CoA(in) = acetyl-CoA(out). Mitochondrial NAD(+) transporter that acts as a 'metabolic gate' in hepatic lipogenesis. Provides NAD(+) substrate to mitochondrial SIRT3 deacetylase and enables its NAD(+)-dependent activities in mitochondrial energy metabolism. This triggers downstream activation of PRKAA1/AMPK-alpha signaling cascade that negatively regulates sterol regulatory element-binding protein (SREBP) transcriptional activities and ATP-consuming lipogenesis to restore cellular energy balance. May transport other mitochondrial metabolites having an aromatic nucleotide and phosphate groups, such as acetyl-CoA. Does not transport amino acids. The transport mechanism remains to be elucidated. This chain is Solute carrier family 25 member 47, found in Rattus norvegicus (Rat).